A 321-amino-acid chain; its full sequence is MSALGRNLGNFIQTFSNKTSSIKTVNGLKRGLLPCCGSTVRPIAKDNHHQSPVLNVNRSSISGIRTELFNSNGLITQFQVRQYCSESKLQVSPTPKTLLSEICQREITDFKTIFEDNNNEVDSFLEEFGFELTKEGDQALLKKTFADGTNIVIRFETLEQPIEEDFDEQDENDQNERDEDDAEEQEEDEVEEEEEEQQEEEEGENDEELTEGAEEDSHEHPFEIEVTPKGNASGKLTFGCYASHDGNYTVSGFYKGGFGETVNPVDIGGTSMEFQDNILLVLQQYGINERLSFFIHDYVHNKKINDYVESFEALKDFVSKE.

A disordered region spans residues 157 to 220 (TLEQPIEEDF…EGAEEDSHEH (64 aa)). The segment covering 161 to 214 (PIEEDFDEQDENDQNERDEDDAEEQEEDEVEEEEEEQQEEEEGENDEELTEGAE) has biased composition (acidic residues). A coiled-coil region spans residues 167 to 212 (DEQDENDQNERDEDDAEEQEEDEVEEEEEEQQEEEEGENDEELTEG).

This is an uncharacterized protein from Dictyostelium discoideum (Social amoeba).